Reading from the N-terminus, the 25-residue chain is Caerin 2.1 (25 aa).

In terms of tissue distribution, expressed by the skin dorsal glands.

The protein resides in the secreted. Its function is as follows. Antibacterial peptide with narrow spectrum of activity. Active against the Gram-negative bacterium P.multocida (MIC=25 ug/ml). Inhibits the formation of NO by neuronal nitric oxide synthase with an IC(50) of 9 ug/ml. In Litoria peronii (Emerald spotted tree frog), this protein is Caerin 2.1.